The primary structure comprises 212 residues: Orotate phosphoribosyltransferase (212 aa).

5-phospho-alpha-D-ribose 1-diphosphate is bound by residues Arg-97, Lys-101, His-103, and 123 to 131; that span reads EDLISTGGS. Ser-127 provides a ligand contact to orotate.

This sequence belongs to the purine/pyrimidine phosphoribosyltransferase family. PyrE subfamily. As to quaternary structure, homodimer. The cofactor is Mg(2+).

The enzyme catalyses orotidine 5'-phosphate + diphosphate = orotate + 5-phospho-alpha-D-ribose 1-diphosphate. Its pathway is pyrimidine metabolism; UMP biosynthesis via de novo pathway; UMP from orotate: step 1/2. Functionally, catalyzes the transfer of a ribosyl phosphate group from 5-phosphoribose 1-diphosphate to orotate, leading to the formation of orotidine monophosphate (OMP). The chain is Orotate phosphoribosyltransferase from Bacteroides thetaiotaomicron (strain ATCC 29148 / DSM 2079 / JCM 5827 / CCUG 10774 / NCTC 10582 / VPI-5482 / E50).